Reading from the N-terminus, the 82-residue chain is Sulfur carrier protein TusA (82 aa).

The active-site Cysteine persulfide intermediate is the cysteine 19.

Belongs to the sulfur carrier protein TusA family.

The protein localises to the cytoplasm. Functionally, sulfur carrier protein which probably makes part of a sulfur-relay system. The sequence is that of Sulfur carrier protein TusA from Vibrio parahaemolyticus serotype O3:K6 (strain RIMD 2210633).